The following is a 101-amino-acid chain: Large ribosomal subunit protein uL24 (101 aa).

Belongs to the universal ribosomal protein uL24 family. As to quaternary structure, part of the 50S ribosomal subunit.

In terms of biological role, one of two assembly initiator proteins, it binds directly to the 5'-end of the 23S rRNA, where it nucleates assembly of the 50S subunit. Its function is as follows. One of the proteins that surrounds the polypeptide exit tunnel on the outside of the subunit. The polypeptide is Large ribosomal subunit protein uL24 (Borrelia recurrentis (strain A1)).